A 132-amino-acid chain; its full sequence is Small ribosomal subunit protein uS8 (132 aa).

Belongs to the universal ribosomal protein uS8 family. Part of the 30S ribosomal subunit. Contacts proteins S5 and S12.

Functionally, one of the primary rRNA binding proteins, it binds directly to 16S rRNA central domain where it helps coordinate assembly of the platform of the 30S subunit. The polypeptide is Small ribosomal subunit protein uS8 (Rubrobacter xylanophilus (strain DSM 9941 / JCM 11954 / NBRC 16129 / PRD-1)).